The primary structure comprises 369 residues: Quinolinate synthase (369 aa).

The iminosuccinate site is built by H47 and S64. [4Fe-4S] cluster is bound at residue C111. Iminosuccinate contacts are provided by residues 142 to 144 and S163; that span reads YVN. C231 is a [4Fe-4S] cluster binding site. Iminosuccinate is bound by residues 257-259 and T274; that span reads HPE. Position 321 (C321) interacts with [4Fe-4S] cluster.

It belongs to the quinolinate synthase family. Type 3 subfamily. [4Fe-4S] cluster serves as cofactor.

It is found in the cytoplasm. It catalyses the reaction iminosuccinate + dihydroxyacetone phosphate = quinolinate + phosphate + 2 H2O + H(+). Its pathway is cofactor biosynthesis; NAD(+) biosynthesis; quinolinate from iminoaspartate: step 1/1. Functionally, catalyzes the condensation of iminoaspartate with dihydroxyacetone phosphate to form quinolinate. This chain is Quinolinate synthase, found in Bacillus licheniformis (strain ATCC 14580 / DSM 13 / JCM 2505 / CCUG 7422 / NBRC 12200 / NCIMB 9375 / NCTC 10341 / NRRL NRS-1264 / Gibson 46).